A 203-amino-acid chain; its full sequence is Holliday junction branch migration complex subunit RuvA (203 aa).

A domain I region spans residues 1-63; it reads MIGQLSGKVD…EEHIHLYGFL (63 aa). Residues 64-142 are domain II; the sequence is TLEEKIFFNL…KISSGSAIIK (79 aa). The tract at residues 143–149 is flexible linker; the sequence is ESLNIKN. Residues 150–203 are domain III; the sequence is ITPVASNEVIKALVNLGFSRFEAQNAVQGIITQNPEISIDELIKTALKNRNSNF.

It belongs to the RuvA family. Homotetramer. Forms an RuvA(8)-RuvB(12)-Holliday junction (HJ) complex. HJ DNA is sandwiched between 2 RuvA tetramers; dsDNA enters through RuvA and exits via RuvB. An RuvB hexamer assembles on each DNA strand where it exits the tetramer. Each RuvB hexamer is contacted by two RuvA subunits (via domain III) on 2 adjacent RuvB subunits; this complex drives branch migration. In the full resolvosome a probable DNA-RuvA(4)-RuvB(12)-RuvC(2) complex forms which resolves the HJ.

The protein resides in the cytoplasm. Its function is as follows. The RuvA-RuvB-RuvC complex processes Holliday junction (HJ) DNA during genetic recombination and DNA repair, while the RuvA-RuvB complex plays an important role in the rescue of blocked DNA replication forks via replication fork reversal (RFR). RuvA specifically binds to HJ cruciform DNA, conferring on it an open structure. The RuvB hexamer acts as an ATP-dependent pump, pulling dsDNA into and through the RuvAB complex. HJ branch migration allows RuvC to scan DNA until it finds its consensus sequence, where it cleaves and resolves the cruciform DNA. The sequence is that of Holliday junction branch migration complex subunit RuvA from Rickettsia conorii (strain ATCC VR-613 / Malish 7).